A 609-amino-acid polypeptide reads, in one-letter code: Protein NRT1/ PTR FAMILY 7.1 (609 aa).

A run of 2 helical transmembrane segments spans residues 67–87 (IILL…GVNL) and 109–129 (WTGT…SYWG). Thr-133 is modified (phosphothreonine). A run of 10 helical transmembrane segments spans residues 136–156 (IFQV…WFFL), 173–193 (SSLG…GYGG), 216–236 (FFSY…TILV), 243–263 (LWTE…VAFL), 367–387 (PIWL…SLFV), 402–422 (IPAA…TGIY), 438–458 (MGIG…TEIQ), 474–494 (ILWQ…MYVG), 516–536 (MASM…VMAI), and 559–579 (FYFL…IFAK).

Belongs to the major facilitator superfamily. Proton-dependent oligopeptide transporter (POT/PTR) (TC 2.A.17) family. As to expression, expressed in flowers.

The protein resides in the membrane. The polypeptide is Protein NRT1/ PTR FAMILY 7.1 (NPF7.1) (Arabidopsis thaliana (Mouse-ear cress)).